Here is a 297-residue protein sequence, read N- to C-terminus: Beta-1,3-galactosyltransferase 5 (297 aa).

Residues 1-7 (MAFPKMR) lie on the Cytoplasmic side of the membrane. Residues 8-28 (LMYVCLLVLGALCVYFSMYSL) traverse the membrane as a helical; Signal-anchor for type II membrane protein segment. Residues 29 to 297 (NLFKEQSFVY…KPRTLLDYWQ (269 aa)) lie on the Lumenal side of the membrane. 3 N-linked (GlcNAc...) asparagine glycosylation sites follow: Asn130, Asn174, and Asn231.

Belongs to the glycosyltransferase 31 family.

It localises to the golgi apparatus membrane. It catalyses the reaction a globoside Gb4Cer (d18:1(4E)) + UDP-alpha-D-galactose = a globoside GalGb4Cer (d18:1(4E)) + UDP + H(+). The protein operates within protein modification; protein glycosylation. Its function is as follows. Catalyzes the transfer of Gal to GlcNAc-based acceptors with a preference for the core3 O-linked glycan GlcNAc(beta1,3)GalNAc structure. Can use glycolipid LC3Cer as an efficient acceptor. This Pan troglodytes (Chimpanzee) protein is Beta-1,3-galactosyltransferase 5 (B3GALT5).